The chain runs to 449 residues: 23S rRNA (uracil(1939)-C(5))-methyltransferase RlmD (449 aa).

A TRAM domain is found at 1–66; sequence MGRSRHHNKL…AKFDEAKVVE (66 aa). Cys79, Cys85, Cys88, and Cys169 together coordinate [4Fe-4S] cluster. S-adenosyl-L-methionine contacts are provided by Gln280, Phe309, Asn314, Glu330, Asn357, and Asp379. Cys405 acts as the Nucleophile in catalysis.

The protein belongs to the class I-like SAM-binding methyltransferase superfamily. RNA M5U methyltransferase family. RlmD subfamily.

It catalyses the reaction uridine(1939) in 23S rRNA + S-adenosyl-L-methionine = 5-methyluridine(1939) in 23S rRNA + S-adenosyl-L-homocysteine + H(+). Its function is as follows. Catalyzes the formation of 5-methyl-uridine at position 1939 (m5U1939) in 23S rRNA. This is 23S rRNA (uracil(1939)-C(5))-methyltransferase RlmD from Francisella tularensis subsp. novicida (strain U112).